We begin with the raw amino-acid sequence, 387 residues long: Xylose isomerase (387 aa).

Catalysis depends on residues His-53 and Asp-56. Mg(2+) is bound by residues Glu-180, Glu-216, His-219, Asp-244, Asp-254, Asp-256, and Asp-286.

This sequence belongs to the xylose isomerase family. Homotetramer. Mg(2+) is required as a cofactor.

It is found in the cytoplasm. The catalysed reaction is alpha-D-xylose = alpha-D-xylulofuranose. This chain is Xylose isomerase (xylA), found in Thermus thermophilus (strain ATCC 27634 / DSM 579 / HB8).